A 273-amino-acid chain; its full sequence is 4-hydroxy-tetrahydrodipicolinate reductase (273 aa).

NAD(+) contacts are provided by residues 12 to 17 (GAGGRM) and glutamate 38. Arginine 39 contacts NADP(+). Residues 102–104 (GTT) and 126–129 (AANF) contribute to the NAD(+) site. The active-site Proton donor/acceptor is the histidine 159. Histidine 160 provides a ligand contact to (S)-2,3,4,5-tetrahydrodipicolinate. Lysine 163 functions as the Proton donor in the catalytic mechanism. 169–170 (GT) lines the (S)-2,3,4,5-tetrahydrodipicolinate pocket.

Belongs to the DapB family. In terms of assembly, homotetramer.

Its subcellular location is the cytoplasm. The enzyme catalyses (S)-2,3,4,5-tetrahydrodipicolinate + NAD(+) + H2O = (2S,4S)-4-hydroxy-2,3,4,5-tetrahydrodipicolinate + NADH + H(+). It carries out the reaction (S)-2,3,4,5-tetrahydrodipicolinate + NADP(+) + H2O = (2S,4S)-4-hydroxy-2,3,4,5-tetrahydrodipicolinate + NADPH + H(+). It participates in amino-acid biosynthesis; L-lysine biosynthesis via DAP pathway; (S)-tetrahydrodipicolinate from L-aspartate: step 4/4. Catalyzes the conversion of 4-hydroxy-tetrahydrodipicolinate (HTPA) to tetrahydrodipicolinate. The protein is 4-hydroxy-tetrahydrodipicolinate reductase of Shigella boydii serotype 4 (strain Sb227).